A 446-amino-acid polypeptide reads, in one-letter code: MSRKYFGTDGIRGRVGEYPITPDFMLKLGWAAGMAFRKQGHCRVLVGKDTRISGYMFESALEAGLSAAGADVMLLGPMPTPAIAYLTRTFHAEAGIVISASHNPHDDNGIKFFSGQGTKLPDEVELMIEELLDQPMTVIESGKLGKVSRINDAAGRYIEFCKSSVPSSTSFEGLKLVVDCAHGATYKVAPSVFRELGADVTVLHAQPDGLNINEGCGSTHIESLQAAVLVGHADLGIAFDGDGDRVLMVDHTGAIVDGDELLFIIARDLQEHGKLQGGVVGTLMSNLGLELALKDLDIPFVRAKVGDRYVMAELLEREWLVGGENSGHVVCCNHTTTGDAIIAALQVLMALKRRGETLAQARQALRKCPQVLINVRFGASKVDPLEHPAVKEASAKVTDALAGRGRVLLRKSGTEPLVRVMVEGEDESQVRAHAEALAKLVSEVCV.

The Phosphoserine intermediate role is filled by S101. The Mg(2+) site is built by S101, D240, D242, and D244. S101 carries the post-translational modification Phosphoserine.

This sequence belongs to the phosphohexose mutase family. Mg(2+) is required as a cofactor. In terms of processing, activated by phosphorylation.

It catalyses the reaction alpha-D-glucosamine 1-phosphate = D-glucosamine 6-phosphate. Catalyzes the conversion of glucosamine-6-phosphate to glucosamine-1-phosphate. This is Phosphoglucosamine mutase from Pseudomonas putida (strain ATCC 700007 / DSM 6899 / JCM 31910 / BCRC 17059 / LMG 24140 / F1).